Here is a 353-residue protein sequence, read N- to C-terminus: MSGNTLGTLFCVTNFGESHGPAIGCVVDGCPPGLPLEAADIQAELDRRRPGTSRHVTQRQEADQVEILSGVYEGVTTGTPIGLLIRNTDARSKDYSNIADTFRPGHADFAYWRKYGVRDPRGGGRSSARLTAPTVAAGAIAKKWLASQFGVRVRGYMSQLGPIAIPFSSWDDVPGNAFYAPNAAVVPELEAYMDQLRRDGDSVGARIEVVAEGLPAGWGEPIYDRLDADIAHAMMGLNAVKGVSLGAGFESIAQRGSEHGDEITPEGFASNHAGGVLGGISTGQPITVSLAIKPTSSIRVERRSVNRAGEPVMVQTLGRHDPCVGIRATPIAEALLALVLIDHALRQRAQCGG.

Residues arginine 48 and arginine 54 each coordinate NADP(+). FMN-binding positions include 125–127, 238–239, glycine 278, 293–297, and arginine 319; these read RSS, NA, and KPTSS.

Belongs to the chorismate synthase family. Homotetramer. Requires FMNH2 as cofactor.

The catalysed reaction is 5-O-(1-carboxyvinyl)-3-phosphoshikimate = chorismate + phosphate. The protein operates within metabolic intermediate biosynthesis; chorismate biosynthesis; chorismate from D-erythrose 4-phosphate and phosphoenolpyruvate: step 7/7. Its function is as follows. Catalyzes the anti-1,4-elimination of the C-3 phosphate and the C-6 proR hydrogen from 5-enolpyruvylshikimate-3-phosphate (EPSP) to yield chorismate, which is the branch point compound that serves as the starting substrate for the three terminal pathways of aromatic amino acid biosynthesis. This reaction introduces a second double bond into the aromatic ring system. The sequence is that of Chorismate synthase from Bordetella pertussis (strain Tohama I / ATCC BAA-589 / NCTC 13251).